The sequence spans 917 residues: Isoleucine--tRNA ligase (917 aa).

The 'HIGH' region signature appears at 59 to 69; sequence PYANGHIHIGH. Glu-569 provides a ligand contact to L-isoleucyl-5'-AMP. A 'KMSKS' region motif is present at residues 610–614; it reads KMSKS. Lys-613 lines the ATP pocket. Cys-890, Cys-893, Cys-905, and Cys-908 together coordinate Zn(2+).

This sequence belongs to the class-I aminoacyl-tRNA synthetase family. IleS type 1 subfamily. As to quaternary structure, monomer. It depends on Zn(2+) as a cofactor.

It localises to the cytoplasm. The catalysed reaction is tRNA(Ile) + L-isoleucine + ATP = L-isoleucyl-tRNA(Ile) + AMP + diphosphate. Functionally, catalyzes the attachment of isoleucine to tRNA(Ile). As IleRS can inadvertently accommodate and process structurally similar amino acids such as valine, to avoid such errors it has two additional distinct tRNA(Ile)-dependent editing activities. One activity is designated as 'pretransfer' editing and involves the hydrolysis of activated Val-AMP. The other activity is designated 'posttransfer' editing and involves deacylation of mischarged Val-tRNA(Ile). The sequence is that of Isoleucine--tRNA ligase from Campylobacter jejuni subsp. jejuni serotype O:2 (strain ATCC 700819 / NCTC 11168).